The chain runs to 314 residues: Malate dehydrogenase (314 aa).

NAD(+) is bound by residues 11–16 (GSGNIG) and D35. Substrate-binding residues include R84 and R90. NAD(+)-binding positions include N97 and 120-122 (ITN). Substrate contacts are provided by N122 and R153. The active-site Proton acceptor is H177.

It belongs to the LDH/MDH superfamily. MDH type 3 family.

It catalyses the reaction (S)-malate + NAD(+) = oxaloacetate + NADH + H(+). Functionally, catalyzes the reversible oxidation of malate to oxaloacetate. This is Malate dehydrogenase from Rickettsia canadensis (strain McKiel).